We begin with the raw amino-acid sequence, 170 residues long: N-alpha-acetyltransferase 50 (170 aa).

The N-acetyltransferase domain occupies 6-155 (IELGDVTPHN…DAHVLQKNLK (150 aa)). A substrate-binding site is contributed by tyrosine 31. Residue tyrosine 73 is part of the active site. Residue methionine 75 coordinates substrate. Position 77-90 (77-90 (LGCLAPYRRLGIGT)) interacts with acetyl-CoA. CoA is bound at residue 79-90 (CLAPYRRLGIGT). Residue histidine 112 is part of the active site. 117-126 (NESAIDFYRK) lines the CoA pocket. The interval 138 to 141 (YYKR) is substrate.

This sequence belongs to the acetyltransferase family. GNAT subfamily.

It localises to the cytoplasm. The protein localises to the nucleus. The catalysed reaction is N-terminal L-methionyl-L-alanyl-[protein] + acetyl-CoA = N-terminal N(alpha)-acetyl-L-methionyl-L-alanyl-[protein] + CoA + H(+). It carries out the reaction N-terminal L-methionyl-L-seryl-[protein] + acetyl-CoA = N-terminal N(alpha)-acetyl-L-methionyl-L-seryl-[protein] + CoA + H(+). The enzyme catalyses N-terminal L-methionyl-L-valyl-[protein] + acetyl-CoA = N-terminal N(alpha)-acetyl-L-methionyl-L-valyl-[protein] + CoA + H(+). It catalyses the reaction N-terminal L-methionyl-L-threonyl-[protein] + acetyl-CoA = N-terminal N(alpha)-acetyl-L-methionyl-L-threonyl-[protein] + CoA + H(+). The catalysed reaction is N-terminal L-methionyl-L-lysyl-[protein] + acetyl-CoA = N-terminal N(alpha)-acetyl-L-methionyl-L-lysyl-[protein] + CoA + H(+). It carries out the reaction N-terminal L-methionyl-L-leucyl-[protein] + acetyl-CoA = N-terminal N(alpha)-acetyl-L-methionyl-L-leucyl-[protein] + CoA + H(+). The enzyme catalyses N-terminal L-methionyl-L-phenylalanyl-[protein] + acetyl-CoA = N-terminal N(alpha)-acetyl-L-methionyl-L-phenylalanyl-[protein] + CoA + H(+). It catalyses the reaction N-terminal L-methionyl-L-tyrosyl-[protein] + acetyl-CoA = N-terminal N(alpha)-acetyl-L-methionyl-L-tyrosyl-[protein] + CoA + H(+). In terms of biological role, N-alpha-acetyltransferase that acetylates the N-terminus of proteins that retain their initiating methionine. Has a broad substrate specificity: able to acetylate the initiator methionine of most peptides, except for those with a proline in second position. Also displays N-epsilon-acetyltransferase activity by mediating acetylation of the side chain of specific lysines on proteins. The relevance of N-epsilon-acetyltransferase activity is however unclear. Required for sister chromatid cohesion during mitosis by promoting binding of CDCA5/sororin to cohesin. In Xenopus laevis (African clawed frog), this protein is N-alpha-acetyltransferase 50 (naa50).